The chain runs to 188 residues: Ribosome-recycling factor (188 aa).

The protein belongs to the RRF family.

It is found in the cytoplasm. Functionally, responsible for the release of ribosomes from messenger RNA at the termination of protein biosynthesis. May increase the efficiency of translation by recycling ribosomes from one round of translation to another. This Cereibacter sphaeroides (strain ATCC 17029 / ATH 2.4.9) (Rhodobacter sphaeroides) protein is Ribosome-recycling factor.